Here is a 311-residue protein sequence, read N- to C-terminus: tRNA dimethylallyltransferase (311 aa).

Residue 8-15 (GPTGVGKS) participates in ATP binding. 10–15 (TGVGKS) contributes to the substrate binding site.

This sequence belongs to the IPP transferase family. In terms of assembly, monomer. Mg(2+) serves as cofactor.

It carries out the reaction adenosine(37) in tRNA + dimethylallyl diphosphate = N(6)-dimethylallyladenosine(37) in tRNA + diphosphate. In terms of biological role, catalyzes the transfer of a dimethylallyl group onto the adenine at position 37 in tRNAs that read codons beginning with uridine, leading to the formation of N6-(dimethylallyl)adenosine (i(6)A). The polypeptide is tRNA dimethylallyltransferase (Mycobacterium leprae (strain Br4923)).